A 111-amino-acid polypeptide reads, in one-letter code: Transcription and mRNA export factor SUS1 (111 aa).

This sequence belongs to the ENY2 family. Component of the nuclear pore complex (NPC)-associated TREX-2 complex (transcription and export complex 2), composed of at least SUS1, SAC3, THP1, SEM1, and CDC31. TREX-2 contains 2 SUS1 chains. The TREX-2 complex interacts with the nucleoporin NUP1. Component of the 1.8 MDa SAGA transcription coactivator-HAT complex. SAGA is built of 5 distinct domains with specialized functions. Within the SAGA complex, SUS1, SGF11, SGF73 and UBP8 form an additional subcomplex of SAGA called the DUB module (deubiquitination module). Interacts directly with THP1, SAC3, SGF11, and with the RNA polymerase II.

The protein localises to the nucleus. It localises to the nucleoplasm. It is found in the cytoplasm. The protein resides in the P-body. In terms of biological role, involved in mRNA export coupled transcription activation by association with both the TREX-2 and the SAGA complexes. At the promoters, SAGA is required for recruitment of the basal transcription machinery. It influences RNA polymerase II transcriptional activity through different activities such as TBP interaction and promoter selectivity, interaction with transcription activators, and chromatin modification through histone acetylation and deubiquitination. Within the SAGA complex, participates in a subcomplex required for deubiquitination of H2B and for the maintenance of steady-state H3 methylation levels. The TREX-2 complex functions in docking export-competent ribonucleoprotein particles (mRNPs) to the nuclear entrance of the nuclear pore complex (nuclear basket). TREX-2 participates in mRNA export and accurate chromatin positioning in the nucleus by tethering genes to the nuclear periphery. May also be involved in cytoplasmic mRNA decay by interaction with components of P-bodies. This is Transcription and mRNA export factor SUS1 from Lodderomyces elongisporus (strain ATCC 11503 / CBS 2605 / JCM 1781 / NBRC 1676 / NRRL YB-4239) (Yeast).